The following is a 193-amino-acid chain: Ion-translocating oxidoreductase complex subunit A (193 aa).

6 helical membrane passes run 5–25 (ILLI…FLGL), 39–59 (IGMG…AYLV), 72–92 (LRTL…EMVI), 102–122 (LLGI…VALL), 134–154 (VIYG…FAAL), and 171–191 (SIAL…SGLV).

Belongs to the NqrDE/RnfAE family. In terms of assembly, the complex is composed of six subunits: RnfA, RnfB, RnfC, RnfD, RnfE and RnfG.

It localises to the cell inner membrane. Its function is as follows. Part of a membrane-bound complex that couples electron transfer with translocation of ions across the membrane. This is Ion-translocating oxidoreductase complex subunit A from Histophilus somni (strain 129Pt) (Haemophilus somnus).